Here is a 330-residue protein sequence, read N- to C-terminus: DNA-directed RNA polymerase subunit alpha (330 aa).

Positions M1 to N225 are alpha N-terminal domain (alpha-NTD). The tract at residues V237–A330 is alpha C-terminal domain (alpha-CTD).

This sequence belongs to the RNA polymerase alpha chain family. As to quaternary structure, homodimer. The RNAP catalytic core consists of 2 alpha, 1 beta, 1 beta' and 1 omega subunit. When a sigma factor is associated with the core the holoenzyme is formed, which can initiate transcription.

It carries out the reaction RNA(n) + a ribonucleoside 5'-triphosphate = RNA(n+1) + diphosphate. In terms of biological role, DNA-dependent RNA polymerase catalyzes the transcription of DNA into RNA using the four ribonucleoside triphosphates as substrates. In Dehalococcoides mccartyi (strain ATCC BAA-2266 / KCTC 15142 / 195) (Dehalococcoides ethenogenes (strain 195)), this protein is DNA-directed RNA polymerase subunit alpha.